We begin with the raw amino-acid sequence, 418 residues long: Gamma-glutamyl phosphate reductase (418 aa).

The protein belongs to the gamma-glutamyl phosphate reductase family.

Its subcellular location is the cytoplasm. The catalysed reaction is L-glutamate 5-semialdehyde + phosphate + NADP(+) = L-glutamyl 5-phosphate + NADPH + H(+). It functions in the pathway amino-acid biosynthesis; L-proline biosynthesis; L-glutamate 5-semialdehyde from L-glutamate: step 2/2. Catalyzes the NADPH-dependent reduction of L-glutamate 5-phosphate into L-glutamate 5-semialdehyde and phosphate. The product spontaneously undergoes cyclization to form 1-pyrroline-5-carboxylate. The sequence is that of Gamma-glutamyl phosphate reductase from Histophilus somni (strain 129Pt) (Haemophilus somnus).